Consider the following 926-residue polypeptide: Alanine--tRNA ligase (926 aa).

4 residues coordinate Zn(2+): His-611, His-615, Cys-714, and His-718.

Belongs to the class-II aminoacyl-tRNA synthetase family. It depends on Zn(2+) as a cofactor.

The protein localises to the cytoplasm. The catalysed reaction is tRNA(Ala) + L-alanine + ATP = L-alanyl-tRNA(Ala) + AMP + diphosphate. Catalyzes the attachment of alanine to tRNA(Ala) in a two-step reaction: alanine is first activated by ATP to form Ala-AMP and then transferred to the acceptor end of tRNA(Ala). Also edits incorrectly charged Ser-tRNA(Ala) and Gly-tRNA(Ala) via its editing domain. This Methanosarcina mazei (strain ATCC BAA-159 / DSM 3647 / Goe1 / Go1 / JCM 11833 / OCM 88) (Methanosarcina frisia) protein is Alanine--tRNA ligase.